Here is a 1809-residue protein sequence, read N- to C-terminus: MSLGELLETCRSRRIELWSEAGRLRYRAPQGALDAGLAERLRAEREALLEHLEGGPGWRAEPDLAHQRFPLTPVQAAYVLGRQAAFDYGGNACQLYAEYDWPADTDPARLEAAWNAMVERHPMLRAVIEDNAWQRVLPEVPWQRLTVHACAGLDEAAFQAHLERVRERLDHACAALDQWPVLRPELSIGRDDCVLHCSVDFTLVDYASLQLLLGEWRRRYLDPQWTAEPLEATFRDYVGVEQRRRQSPAWQRDRDWWLARLDALPGRPDLPLRAQPDTRSTRFRHFHARLDEAAWQALGARAGEHGLSAAGVALAAFAETIGRWSQAPAFCLNLTVLNRPPLHPQLAQVLGDFTALSLLAVDSRHGDSFVERARRIGEQMFDDLDHPTFSGVDLLRELARRRGRGADLMPVVFTSGIGSVQRLLGDGEAPRAPRYMISQTPQVWLDCQVTDQFGGLEIGWDVRLGLFPEGQAEAMFDDFVGLLRRLAQSPRAWTDGDATEPVEAPPQALPGSARSIAAGFAERALLTPDATVIHDAAGSYSYRQVAQHASALRRVLEAHGAGRGRRVAVMLPKSAAQLVAVIGILQAGAAYVPVDIRQPPLRRQAILASPEVVAWVCLESDVPNAGCACVAIDRLAADSAWPPPPAAEVAADDLAYVIYTSGSTGTPKGVMLSHAAVSNTLLDINQRYGVDANDRVLGLAELSFDLSVYDFFGATAAGAQVVLPDPARGSDPSHWAELLERHAITLWNSVPAQGQMLIDYLESEPQRHLPGPRCVLWSGDWIPVSLPTRWWRRWPDSALFSLGGATEAAIWSIEQPIRPQHTELASIPYGRALRGQSVEVLDARGRRCPPGVRGEIHIGGVGLALGYAGDPQRTAERFVRHPDGRRLYRTGDLGRYLADGSIEFLGREDDQVKIRGHRIELAELDAALCAHPQVNLAATVVLGETHERSLASFVTLHAPAEAGEDPRTALDTVRQRAAQALRRDWGSEEGIAAAVAALDRACLASLAAWLAGSGLFASATPLDFATLCQRLGIAEARQRLLRHWLRQLEEGGYLRAEGEGWLGCAERPAQSPEDAWTAFAGCAPAALWPAELVAYLRDSAQSLGEQLAGRISPAALMFPQGSARIAEAMYSQGLHAQALHEAMAEAIAAIVERQPQRRWRLLELGAGTAAASRAVIARLAPLVQRGTEVDYLFTDVSSYFLAAARERFADQPWVRFGRFDMNGDLLDQGVAPHSVDILLSSGALNNALDTPALLAGLRELLSADAWLVIQELTREHNEISVSQSLMMENPRDLRDERRQLFVHTGQWLEWLAAQGGDLACGVVPPGSALDLLGYDVLLARCKTDRARLEPAELLAFVEARVPRYMLPAQLRVLERLPVTGNGKIDRKALTGFARQPQADLRHGVAQAPADELESALLALWREVLDNPSLGVEQDFFGAGGDSLLIAQLIARLRERLESARRHPFDRLLRWALSQPTPRGLAERLRSAPEEGRGPALAAARGVAPAQTGMSRAPLAEGAVALDPLVRLVPGEGVPRVLVHEGLGTLLPYRPLLRALGEGRPLLGLAVHDSDAYLAIPAEYLNACLGRRYAEALHGAGLREVDLLGYCSGGLVALETAKSLLQRGVRVRQLDIVSSYRIPYRVDDERLLLFSFAATLGLDTAALGFPAPERLGQAVQAALAQTPERLGAEALAGLPGLADLVALRGRVLQAASGSADAASVERDTLYRLFCHSVRASQAEALEPYVGALRLFVPDAGNPLVPRYAEALETQWRAAALGACGIHEVPGGHFDCLGEALAQSLSKPMPEEASQ.

The segment at 69-490 (FPLTPVQAAY…GLLRRLAQSP (422 aa)) is condensation/cyclization. Residues 520 to 915 (FAERALLTPD…GREDDQVKIR (396 aa)) form an adenylation region. A Carrier domain is found at 1407 to 1488 (APADELESAL…GLAERLRSAP (82 aa)). At serine 1442 the chain carries O-(pantetheine 4'-phosphoryl)serine. The segment at 1584–1797 (LGRRYAEALH…FDCLGEALAQ (214 aa)) is thioesterase.

It belongs to the NRP synthetase family. Pantetheine 4'-phosphate serves as cofactor.

The enzyme catalyses holo-[peptidyl-carrier protein] + L-cysteine + ATP = L-cysteinyl-[peptidyl-carrier protein] + AMP + diphosphate. It functions in the pathway siderophore biosynthesis. Involved in the biosynthesis of the siderophore pyochelin. Adenylates L-cysteine and loads it onto its peptidyl carrier domain via a thioester linkage to the phosphopanthetheine moiety. Then forms a peptide bond between the salicyl-thiazolinyl intermediate bound to the second carrier domain of PchE and the cysteine bound to its own peptidyl carrier domain to form the salicyl-thiazolinyl-cysteinyl-S-PCP2 intermediate. It subsequently cyclizes the C-terminal cysteine to form the second thiazoline heterocycle in the salicyl-thiazolinyl-thiazolinyl-S-PCP2 intermediate. When this intermediate is released by the action of a thioesterase, it produces the tricyclic acid hydroxyphenyl-thiazolyl-thiazolinyl-carboxylic acid (HPTT-COOH), an advanced intermediate containing the aryl-4,2-bis-heterocyclic skeleton of the bithiazoline class of siderophores. This chain is Pyochelin synthetase PchF, found in Pseudomonas aeruginosa (strain UCBPP-PA14).